The sequence spans 205 residues: UPF0056 membrane protein MJ1677 (205 aa).

6 helical membrane-spanning segments follow: residues 7 to 27, 49 to 69, 70 to 90, 112 to 132, 145 to 165, and 185 to 205; these read ILAF…PVFI, ALAI…FFGI, SLDA…LDMV, IALM…TACM, FLVI…LLSA, and GLIL…GALL.

It belongs to the UPF0056 (MarC) family.

It localises to the cell membrane. The chain is UPF0056 membrane protein MJ1677 from Methanocaldococcus jannaschii (strain ATCC 43067 / DSM 2661 / JAL-1 / JCM 10045 / NBRC 100440) (Methanococcus jannaschii).